Reading from the N-terminus, the 209-residue chain is ATP-dependent Clp protease proteolytic subunit 1 (209 aa).

Residue serine 109 is the Nucleophile of the active site. Histidine 134 is an active-site residue.

The protein belongs to the peptidase S14 family. As to quaternary structure, fourteen ClpP subunits assemble into 2 heptameric rings which stack back to back to give a disk-like structure with a central cavity, resembling the structure of eukaryotic proteasomes.

Its subcellular location is the cytoplasm. The catalysed reaction is Hydrolysis of proteins to small peptides in the presence of ATP and magnesium. alpha-casein is the usual test substrate. In the absence of ATP, only oligopeptides shorter than five residues are hydrolyzed (such as succinyl-Leu-Tyr-|-NHMec, and Leu-Tyr-Leu-|-Tyr-Trp, in which cleavage of the -Tyr-|-Leu- and -Tyr-|-Trp bonds also occurs).. Functionally, cleaves peptides in various proteins in a process that requires ATP hydrolysis. Has a chymotrypsin-like activity. Plays a major role in the degradation of misfolded proteins. In Corynebacterium diphtheriae (strain ATCC 700971 / NCTC 13129 / Biotype gravis), this protein is ATP-dependent Clp protease proteolytic subunit 1.